A 502-amino-acid polypeptide reads, in one-letter code: MLKEFREQRINEIKQISAKGVNPYPYKFEKTHSSQDIKAQFENLNPGEVKEDASVSTAGRIMSLRHHGKSAFFHIKDFFGRIQAYIRQDIVGKDVYEFFKEHIAIGDIVGVKGSVFKSKTGEVTILVKEIELLNKPLRPMPEKWHGIKDKEVLYRQRYVDMIANDETLNRFRIRFEIIKLIREFLNSKGFIEVETPILEYVTGGASARPFITHLNVFDIDMYMRIATELYLKRFIVGGFEKVYELGKNFRNEGLSYKHHPEFTSIEIYQAYADYEDMMNLTEELFVFIVEKLFGTTKVKYQDIEIDFSRPWRRVKMRDFIKEHLGVDILEDTEEKMLEVLKQHDVEVEIKDKGHLIEKLWDLVEDKVVQPTFLLEHPVEISPLAKKHREDPRVTERFELIIYGREMANAFSELNDPVDQYERFLRQAKLREAGDEEAQMMDKDFVRALEYGMPPTGGLGIGIDRLVMLLTNSPTIRDVIAFPLVRPISFEEEEMNLEGGSQE.

Glu-398 and Glu-405 together coordinate Mg(2+).

Belongs to the class-II aminoacyl-tRNA synthetase family. In terms of assembly, homodimer. Mg(2+) is required as a cofactor.

Its subcellular location is the cytoplasm. It carries out the reaction tRNA(Lys) + L-lysine + ATP = L-lysyl-tRNA(Lys) + AMP + diphosphate. The polypeptide is Lysine--tRNA ligase (Thermosipho africanus (strain TCF52B)).